The chain runs to 91 residues: UPF0213 protein NMC1807 (91 aa).

A GIY-YIG domain is found at 4 to 83; sequence SNWSVYLILC…AAQKRQLWEQ (80 aa).

It belongs to the UPF0213 family.

The chain is UPF0213 protein NMC1807 from Neisseria meningitidis serogroup C / serotype 2a (strain ATCC 700532 / DSM 15464 / FAM18).